Here is a 406-residue protein sequence, read N- to C-terminus: Probable G-protein coupled receptor tkr-1 (406 aa).

Residues 1–47 (MNQEFLIQLGERACKNAENLTLPAELEGIFFCAPSSRESLATQVFVA) are Extracellular-facing. A helical membrane pass occupies residues 48–68 (IAFVLLMATAIIGNSVVMWII). Residues 69-76 (YQHKVMHY) lie on the Cytoplasmic side of the membrane. A helical membrane pass occupies residues 77–97 (GFNYFLFNMAFADLLIALFNV). At 98 to 115 (GTSWTYNLYYDWWYGDLC) the chain is on the extracellular side. A helical transmembrane segment spans residues 116–136 (TLTSFFGIAPTTVSVCSMMAL). Over 137–158 (SWDRCQAVVNPLQKRPLSRKRS) the chain is Cytoplasmic. The chain crosses the membrane as a helical span at residues 159–179 (VIAILIIWVVSTVTALPFAIA). Residues 180-204 (ASVNSLYTYDVVTSTVSKAHVCSAP) lie on the Extracellular side of the membrane. Residues 205 to 225 (VNTFFEKVLFGIQYALPIIIL) form a helical membrane-spanning segment. Over 226-261 (GSTFTRIAVAFRATNEATDSSLKNNHTRAKSKAVKM) the chain is Cytoplasmic. Residues 262 to 282 (LFLMVVAFVVCWLPYHIYHAF) form a helical membrane-spanning segment. The Extracellular portion of the chain corresponds to 283–297 (ALEEFFDAARGKYAY). Residues 298–318 (LLIYWIAMSSCAYNPIIYCFA) form a helical membrane-spanning segment. At 319–406 (NERFRIGFRY…KVHLLSCHER (88 aa)) the chain is on the cytoplasmic side.

This sequence belongs to the G-protein coupled receptor 1 family.

The protein localises to the cell membrane. Its function is as follows. Not known. Putative receptor. The protein is Probable G-protein coupled receptor tkr-1 (tkr-1) of Caenorhabditis elegans.